The chain runs to 426 residues: 3-phosphoshikimate 1-carboxyvinyltransferase (426 aa).

Residues Lys-22, Ser-23, and Arg-27 each coordinate 3-phosphoshikimate. Phosphoenolpyruvate is bound at residue Lys-22. Phosphoenolpyruvate contacts are provided by Gly-96 and Arg-124. Residues Ser-170, Ser-171, Gln-172, Ser-198, Asp-314, Asn-337, and Lys-341 each contribute to the 3-phosphoshikimate site. Gln-172 is a binding site for phosphoenolpyruvate. Asp-314 serves as the catalytic Proton acceptor. Phosphoenolpyruvate is bound by residues Arg-345, Arg-387, and Lys-412.

It belongs to the EPSP synthase family. Monomer.

Its subcellular location is the cytoplasm. The catalysed reaction is 3-phosphoshikimate + phosphoenolpyruvate = 5-O-(1-carboxyvinyl)-3-phosphoshikimate + phosphate. It participates in metabolic intermediate biosynthesis; chorismate biosynthesis; chorismate from D-erythrose 4-phosphate and phosphoenolpyruvate: step 6/7. Catalyzes the transfer of the enolpyruvyl moiety of phosphoenolpyruvate (PEP) to the 5-hydroxyl of shikimate-3-phosphate (S3P) to produce enolpyruvyl shikimate-3-phosphate and inorganic phosphate. The chain is 3-phosphoshikimate 1-carboxyvinyltransferase from Shewanella piezotolerans (strain WP3 / JCM 13877).